The sequence spans 292 residues: tRNA pseudouridine synthase B (292 aa).

Catalysis depends on Asp-38, which acts as the Nucleophile.

Belongs to the pseudouridine synthase TruB family. Type 1 subfamily.

The catalysed reaction is uridine(55) in tRNA = pseudouridine(55) in tRNA. Its function is as follows. Responsible for synthesis of pseudouridine from uracil-55 in the psi GC loop of transfer RNAs. The polypeptide is tRNA pseudouridine synthase B (Streptococcus gordonii (strain Challis / ATCC 35105 / BCRC 15272 / CH1 / DL1 / V288)).